Reading from the N-terminus, the 229-residue chain is NAD(P)H-quinone oxidoreductase subunit K, chloroplastic (229 aa).

C43, C44, C108, and C139 together coordinate [4Fe-4S] cluster.

This sequence belongs to the complex I 20 kDa subunit family. As to quaternary structure, NDH is composed of at least 16 different subunits, 5 of which are encoded in the nucleus. [4Fe-4S] cluster is required as a cofactor.

It is found in the plastid. It localises to the chloroplast thylakoid membrane. The enzyme catalyses a plastoquinone + NADH + (n+1) H(+)(in) = a plastoquinol + NAD(+) + n H(+)(out). The catalysed reaction is a plastoquinone + NADPH + (n+1) H(+)(in) = a plastoquinol + NADP(+) + n H(+)(out). In terms of biological role, NDH shuttles electrons from NAD(P)H:plastoquinone, via FMN and iron-sulfur (Fe-S) centers, to quinones in the photosynthetic chain and possibly in a chloroplast respiratory chain. The immediate electron acceptor for the enzyme in this species is believed to be plastoquinone. Couples the redox reaction to proton translocation, and thus conserves the redox energy in a proton gradient. The chain is NAD(P)H-quinone oxidoreductase subunit K, chloroplastic from Piper cenocladum (Ant piper).